A 106-amino-acid polypeptide reads, in one-letter code: 3-phenylpropionate/cinnamic acid dioxygenase ferredoxin subunit (106 aa).

The Rieske domain maps to 4-99 (IYACPVADVP…VHVEGSDIFI (96 aa)). The [2Fe-2S] cluster site is built by Cys-42, His-44, Cys-62, and His-65.

Belongs to the bacterial ring-hydroxylating dioxygenase ferredoxin component family. As to quaternary structure, this dioxygenase system consists of four proteins: the two subunits of the hydroxylase component (HcaE and HcaF), a ferredoxin (HcaC) and a ferredoxin reductase (HcaD). Requires [2Fe-2S] cluster as cofactor.

It participates in aromatic compound metabolism; 3-phenylpropanoate degradation. In terms of biological role, part of the multicomponent 3-phenylpropionate dioxygenase, that converts 3-phenylpropionic acid (PP) and cinnamic acid (CI) into 3-phenylpropionate-dihydrodiol (PP-dihydrodiol) and cinnamic acid-dihydrodiol (CI-dihydrodiol), respectively. This protein seems to be a 2Fe-2S ferredoxin. The chain is 3-phenylpropionate/cinnamic acid dioxygenase ferredoxin subunit from Shigella boydii serotype 4 (strain Sb227).